Reading from the N-terminus, the 616-residue chain is Bifunctional 2-aminoethylphosphonate cytidylyltransferase/aminotransferase (616 aa).

The interval 1–240 (MIKQAVILAG…VKNIYPHIVE (240 aa)) is 2-aminoethylphosphonate cytidylyltransferase. Residues L8, G10, G11, K25, T83, T88, E104, and S105 each coordinate CMP-(2-aminoethyl)phosphonate. Mg(2+) contacts are provided by D106 and D136. Positions 136, 153, and 196 each coordinate CMP-(2-aminoethyl)phosphonate. E220 and D222 together coordinate Mg(2+). A 2-aminoethylphosphonate aminotransferase region spans residues 250–616 (EVLLNPGPAT…EYMNGIGVGV (367 aa)). Pyridoxal 5'-phosphate-binding residues include S313, G314, T315, T390, K441, and T490.

This sequence in the N-terminal section; belongs to the LicC/PntC cytidylyltransferase family. It in the C-terminal section; belongs to the class-V pyridoxal-phosphate-dependent aminotransferase family. PhnW subfamily. Homodimer. The cofactor is Mg(2+). Requires Zn(2+) as cofactor. Pyridoxal 5'-phosphate is required as a cofactor.

The enzyme catalyses (2-aminoethyl)phosphonate + CTP = CMP-(2-aminoethyl)phosphonate + diphosphate. It carries out the reaction (2-aminoethyl)phosphonate + pyruvate = phosphonoacetaldehyde + L-alanine. It functions in the pathway phosphorus metabolism; phosphonate biosynthesis. With respect to regulation, cytidylyltransferase activity is inhibited in the presence of EDTA and is restored by the addition of Mg(2+) or Zn(2+). Its function is as follows. Bifunctional transferase involved in the biosynthesis of cell-surface phosphonates. The aminotransferase region catalyzes the transformation of phosphonoacetaldehyde (PnAA) to 2-aminoethylphosphonate (AEP). The cytidylyltransferase region catalyzes the activation of 2-aminoethylphosphonate (AEP) to CMP-2-aminoethylphosphonate (CMP-AEP). Cannot use phosphocholine. Exhibits strong activity towards CTP, limited activity towards ATP and no activity with GTP. The sequence is that of Bifunctional 2-aminoethylphosphonate cytidylyltransferase/aminotransferase from Treponema denticola (strain ATCC 35405 / DSM 14222 / CIP 103919 / JCM 8153 / KCTC 15104).